Here is a 528-residue protein sequence, read N- to C-terminus: Tyrosine 3-monooxygenase (528 aa).

Phosphoserine; by CaMK2 is present on S19. Residues 33-65 form a disordered region; sequence GQGAPGPSLTGSPWPGTAAPAASYTPTPRSPRF. Positions 47–59 are enriched in low complexity; that stretch reads PGTAAPAASYTPT. Phosphoserine is present on S62. At S71 the chain carries Phosphoserine; by CaMK2 and PKA. Positions 361, 366, and 406 each coordinate Fe cation. S502 is modified (phosphoserine).

The protein belongs to the biopterin-dependent aromatic amino acid hydroxylase family. As to quaternary structure, homotetramer. Interacts (when phosphorylated at Ser-19) with YWHAG; one YWHAG dimer binds to one TH tetramer and this interaction may influence the phosphorylation and dephosphorylation of other sites. Interacts with NT5DC2; the interaction results in reduced phosphorylation and decreased catalytic activity of TH. It depends on Fe(2+) as a cofactor. In terms of processing, phosphorylated on Ser-19, Ser-62 and Ser-71 by several protein kinases with different site specificities. Phosphorylation at Ser-62 and Ser-71 leads to an increase of TH activity. Phosphorylation at Ser-71 activates the enzyme and also counteracts the feedback inhibition of TH by catecholamines. Phosphorylation of Ser-19 and Ser-62 triggers the proteasomal degradation of TH through the ubiquitin-proteasome pathway. Phosphorylation at Ser-62 facilitates transport of TH from the soma to the nerve terminals via the microtubule network. Phosphorylation at Ser-19 induces the high-affinity binding to the 14-3-3 protein YWHAG; this interaction may influence the phosphorylation and dephosphorylation of other sites. Ser-19 increases the phosphorylation at Ser-71 in a hierarchical manner, leading to increased activity. Mainly expressed in the brain and adrenal glands.

It localises to the cytoplasm. It is found in the perinuclear region. The protein resides in the nucleus. Its subcellular location is the cell projection. The protein localises to the axon. It localises to the cytoplasmic vesicle. It is found in the secretory vesicle. The protein resides in the synaptic vesicle. The catalysed reaction is (6R)-L-erythro-5,6,7,8-tetrahydrobiopterin + L-tyrosine + O2 = (4aS,6R)-4a-hydroxy-L-erythro-5,6,7,8-tetrahydrobiopterin + L-dopa. The protein operates within catecholamine biosynthesis; dopamine biosynthesis; dopamine from L-tyrosine: step 1/2. Its activity is regulated as follows. Inhibited in feedback fashion by the catecholamine neurotransmitters, especially by dopamine in competition with tetrahydrobiopterin. Phosphorylation of several Ser/Thr residues in the N-terminus regulates the catalytic activity. Ser-62 and Ser-71 are readily phosphorylated to activate the catalytic activity. A Cysteine modification induced by N-ethylmaleimide (NEM), inhibits tyrosine 3-monooxygenase activity through the modification of the Cys-207. Catalyzes the conversion of L-tyrosine to L-dihydroxyphenylalanine (L-Dopa), the rate-limiting step in the biosynthesis of catecholamines, dopamine, noradrenaline, and adrenaline. Uses tetrahydrobiopterin and molecular oxygen to convert tyrosine to L-Dopa. In addition to tyrosine, is able to catalyze the hydroxylation of phenylalanine and tryptophan with lower specificity. Positively regulates the regression of retinal hyaloid vessels during postnatal development. In terms of biological role, lacks catalytic activity. This Homo sapiens (Human) protein is Tyrosine 3-monooxygenase.